The following is a 98-amino-acid chain: Large ribosomal subunit protein uL23 (98 aa).

This sequence belongs to the universal ribosomal protein uL23 family. In terms of assembly, part of the 50S ribosomal subunit. Contacts protein L29, and trigger factor when it is bound to the ribosome.

In terms of biological role, one of the early assembly proteins it binds 23S rRNA. One of the proteins that surrounds the polypeptide exit tunnel on the outside of the ribosome. Forms the main docking site for trigger factor binding to the ribosome. The polypeptide is Large ribosomal subunit protein uL23 (Hahella chejuensis (strain KCTC 2396)).